The primary structure comprises 317 residues: Aspartate carbamoyltransferase catalytic subunit (317 aa).

Carbamoyl phosphate contacts are provided by arginine 66 and threonine 67. Lysine 94 is a binding site for L-aspartate. Carbamoyl phosphate contacts are provided by arginine 116, histidine 144, and glutamine 147. L-aspartate is bound by residues arginine 177 and arginine 231. Carbamoyl phosphate-binding residues include glycine 272 and proline 273.

This sequence belongs to the aspartate/ornithine carbamoyltransferase superfamily. ATCase family. In terms of assembly, heterododecamer (2C3:3R2) of six catalytic PyrB chains organized as two trimers (C3), and six regulatory PyrI chains organized as three dimers (R2).

It carries out the reaction carbamoyl phosphate + L-aspartate = N-carbamoyl-L-aspartate + phosphate + H(+). It participates in pyrimidine metabolism; UMP biosynthesis via de novo pathway; (S)-dihydroorotate from bicarbonate: step 2/3. Its function is as follows. Catalyzes the condensation of carbamoyl phosphate and aspartate to form carbamoyl aspartate and inorganic phosphate, the committed step in the de novo pyrimidine nucleotide biosynthesis pathway. This chain is Aspartate carbamoyltransferase catalytic subunit, found in Rhodopseudomonas palustris (strain ATCC BAA-98 / CGA009).